Consider the following 541-residue polypeptide: Arginine--tRNA ligase (541 aa).

The 'HIGH' region motif lies at 119-129; sequence ANPTGPLHIGH.

Belongs to the class-I aminoacyl-tRNA synthetase family. Monomer.

It is found in the cytoplasm. The catalysed reaction is tRNA(Arg) + L-arginine + ATP = L-arginyl-tRNA(Arg) + AMP + diphosphate. The protein is Arginine--tRNA ligase of Helicobacter pylori (strain G27).